The following is a 410-amino-acid chain: MAASNQSEVNIGMVGHVDHGKTSLTRKLTGVWTDTHSEELKRGISIRLGYADCEIKKCETCDEPECYTVDKKCDACGGKVDTLRKISFVDAPGHETLMATMLSGASLMDGAILVIAASEECPQPQTKEHLMALDALGVEHILIVQNKIDLVTEEAAIENYNQIKEFTKGTVAENAPIIPVSAHHGANLDVLLKAIQEFIPTPKRDETLTPKLYVARSFDVNKPGSEIKDLKGGVIGGSIIQGALKVGDDLEIRPGIKVTEGNKTHWVPIITKIISLGVGNKKLKTASPGGLIGVGTELDPNLTKSDALSGSLAGLPGTLPETLEKMVIKPQLLERVVGSQDELIIEPLKTNEVLMLNVGTSTTVGVTVSARADKAEIKLKLPVCADKGDRVAISRKIGSRWRLIGYGIIL.

One can recognise a tr-type G domain in the interval 6-203 (QSEVNIGMVG…AIQEFIPTPK (198 aa)). A G1 region spans residues 15–22 (GHVDHGKT). 4 residues coordinate Mg(2+): Asp-18, Thr-22, Gly-43, and Ser-45. Residue 18-23 (DHGKTS) coordinates GTP. The G2 stretch occupies residues 43 to 47 (GISIR). The Zn(2+) site is built by Cys-58, Cys-61, Cys-73, and Cys-76. Positions 90 to 93 (DAPG) are G3. GTP contacts are provided by residues 146 to 149 (NKID) and 181 to 183 (SAH). The interval 146–149 (NKID) is G4. The interval 181–183 (SAH) is G5.

Belongs to the TRAFAC class translation factor GTPase superfamily. Classic translation factor GTPase family. EIF2G subfamily. In terms of assembly, heterotrimer composed of an alpha, a beta and a gamma chain. The cofactor is Mg(2+).

It carries out the reaction GTP + H2O = GDP + phosphate + H(+). Functionally, eIF-2 functions in the early steps of protein synthesis by forming a ternary complex with GTP and initiator tRNA. The sequence is that of Translation initiation factor 2 subunit gamma from Methanococcus maripaludis (strain C6 / ATCC BAA-1332).